The following is a 658-amino-acid chain: Cysteine-rich receptor-like protein kinase 36 (658 aa).

An N-terminal signal peptide occupies residues 1–26 (MERSNLFHIPCFLLLFLLFNINGVHT). 2 consecutive Gnk2-homologous domains span residues 27–128 (TFVC…NIHR) and 139–246 (NVPH…DYRF). Residues 27-281 (TFVCGDEDFS…KKGRMFQPWS (255 aa)) are Extracellular-facing. N38, N64, N116, N150, and N163 each carry an N-linked (GlcNAc...) asparagine glycan. Residues 282–302 (VVVVVFPTGINLAVFVAFVLA) form a helical membrane-spanning segment. Over 303-658 (YRRMRRRIYT…EVSITVLYPR (356 aa)) the chain is Cytoplasmic. Residues 340 to 612 (FSLENKLGQG…ITWLARDGTF (273 aa)) form the Protein kinase domain. ATP is bound by residues 346–354 (LGQGGFGSV) and K368. Position 413 is a phosphotyrosine (Y413). The Proton acceptor role is filled by D465. Residue S469 is modified to Phosphoserine. T505 bears the Phosphothreonine mark. At Y513 the chain carries Phosphotyrosine.

Belongs to the protein kinase superfamily. Ser/Thr protein kinase family. CRK subfamily. As to quaternary structure, interacts with CRK45. In terms of processing, autophosphorylated.

Its subcellular location is the cell membrane. The catalysed reaction is L-seryl-[protein] + ATP = O-phospho-L-seryl-[protein] + ADP + H(+). The enzyme catalyses L-threonyl-[protein] + ATP = O-phospho-L-threonyl-[protein] + ADP + H(+). Forms a complex with CRK45 that may negatively control abscisic acid (ABA) and osmotic stress signal transduction. Can phosphorylate CRK45 in vitro. The chain is Cysteine-rich receptor-like protein kinase 36 from Arabidopsis thaliana (Mouse-ear cress).